The chain runs to 344 residues: Serpentine receptor class delta-3 (344 aa).

The next 7 membrane-spanning stretches (helical) occupy residues 21-41 (IIGY…IILI), 54-74 (MLHL…MLAL), 102-122 (FLHV…MISF), 142-162 (ICIL…SDVA), 203-223 (FSAI…IVFF), 259-279 (IVPI…FQVV), and 287-307 (MPFR…LYFV).

Belongs to the nematode receptor-like protein srd family.

It is found in the membrane. The polypeptide is Serpentine receptor class delta-3 (srd-3) (Caenorhabditis elegans).